The chain runs to 361 residues: RuBisCO accumulation factor 1 (361 aa).

Positions 16–197 are N-terminal alpha-helix; sequence NELAQELLRK…RKQIEQLLVD (182 aa). Positions 221 to 347 are C-terminal beta-sheet; it reads PRIVPVVGQL…VIILVRPRRI (127 aa).

It belongs to the RAF family. In terms of assembly, homodimer. Forms an RbcL(8)-Raf1(8) complex. Each Raf1 dimer clamps the exterior of an RbcL dimer, protecting it. The extreme C-terminus (residues 354-361) inserts into the catalytic pocket of RbcL where the Glu-361 forms a salt bridge with 'Lys-202'. This insertion probably contributes to the assembly of RbcL(8). Forms complexes of many stoichiometries with RbcL with and without RbcS. RbcX and Raf1 can bind simultaneously to RbcL.

Its subcellular location is the cytoplasm. Its function is as follows. A major RuBisCO chaperone. Acts after GroEL-GroES chaperonin to fold and/or assemble the large subunit of RuBisCO (ccbL, rbcL). Cooperates with RbcX in RbcL folding, plays the major role in assembly of dimers into RbcL(8)-Raf1(8) intermediate complexes. RbcS replaces Raf1, leading to holoenzyme formation. Functionally, in vitro acts as an antagonist to CcmM35, suggesting it might regulate RuBisCO condensation and decondensation. The protein is RuBisCO accumulation factor 1 of Nostoc sp. (strain PCC 7120 / SAG 25.82 / UTEX 2576).